The chain runs to 1189 residues: Disabled homolog 2-interacting protein (1189 aa).

Residues 1 to 75 (MSAGGSARKS…EPSAATPFRV (75 aa)) are disordered. Positions 20–38 (LLRRPRLQRQRSRSRSRTR) are enriched in basic residues. The segment covering 39–49 (PARESPQERPG) has biased composition (basic and acidic residues). Residues 101–202 (SFRHILPGFR…WMENLRRAVH (102 aa)) enclose the PH domain. The C2 domain occupies 193–311 (WMENLRRAVH…AGRQFVEKWY (119 aa)). Positions 387–595 (GKVKDFLTDL…TNMQRFLLEI (209 aa)) constitute a Ras-GAP domain. Positions 646–943 (LRDVHTALST…RTPPNLLSTL (298 aa)) are necessary for interaction with AKT1. A compositionally biased stretch (polar residues) spans 653 to 668 (LSTPGSGQLPGTNDLA). Disordered stretches follow at residues 653–678 (LSTP…SSSI) and 715–742 (RSSG…MANG). Positions 669–678 (STPGSGSSSI) are enriched in low complexity. A compositionally biased stretch (polar residues) spans 715–731 (RSSGVQPSPARSSSYSE). A Phosphoserine; by MAP3K5 and RIPK1 modification is found at Ser-728. Ser-747 bears the Phosphoserine mark. Disordered regions lie at residues 803–823 (AGQT…PQLL), 843–865 (PRGL…NSEE), 895–998 (SLTE…SPNA), 1015–1035 (EDEG…KDEL), and 1164–1189 (RNGI…SSNC). Residues 852 to 865 (EGHSSLSSHSNSEE) are compositionally biased toward low complexity. Positions 919–931 (QPPPPPPPPPPAP) are enriched in pro residues. Polar residues-rich tracts occupy residues 938–955 (NLLS…TLAS) and 966–976 (RLRQQSSSSKG). Residues Ser-978 and Ser-995 each carry the phosphoserine modification. The span at 1023–1035 (PPHRDRLRSKDEL) shows a compositional bias: basic and acidic residues. A coiled-coil region spans residues 1026 to 1159 (RDRLRSKDEL…SALTQLKERY (134 aa)).

As to quaternary structure, on plasma membrane, exists in an inactive form complexed with TNFR1; in response to TNF-alpha, dissociates from TNFR1 complex, translocates to cytoplasm and forms part of an intracellular signaling complex comprising TRADD, RIPK1, TRAF2 and MAP3K5. Interacts with DAB1. Interacts (via NPXY motif) with DAB2 (via PID domain). Interacts (via PH domain) with ERN1. Part of a cytoplasmic complex made of HIPK1, DAB2IP and MAP3K5 in response to TNF-alpha; this complex formation promotes MAP3K5-JNK activation and subsequent apoptosis. Interacts (via N-terminal domain) with JAK2; the interaction occurs in a IFNG/IFN-gamma-dependent manner and inhibits JAK2 autophosphorylation activity. Interacts (via C2 domain) with GSK3B; the interaction stimulates GSK3B kinase activation. Interacts (via C2 domain) with PPP2CA. Interacts (via proline-rich motif) with a regulatory p85 subunit (via SH3 domain) of the PI3K complex; the interaction inhibits the PI3K-AKT complex activity in a TNF-alpha-dependent manner in prostate cancer (PCa) cells. Interacts with AKT1; the interaction is increased in a TNF-alpha-induced manner. Interacts (via C2 domain and active form preferentially) with KDR/VEGFR2 (tyrosine-phosphorylated active form preferentially); the interaction occurs at the late phase of VEGFA response and inhibits KDR/VEGFR2 activity. Interacts (via N-terminus C2 domain) with MAP3K5 ('Ser-966' dephosphorylated form preferentially); the interaction occurs in a TNF-alpha-induced manner. Interacts (via Ras-GAP domain) with the catalytic subunit of protein phosphatase PP2A; the interaction occurs in resting endothelial cells, is further enhanced by TNF-alpha stimulation and is required to bridge PP2A to MAP3K5. Interacts (via C-terminus PER domain) with TRAF2 (via zinc fingers); the interaction occurs in a TNF-alpha-dependent manner. Interacts with 14-3-3 proteins; the interaction occurs in a TNF-alpha-dependent manner. Interacts (via Ras-GAP domain) with RIPK1 (via kinase domain); the interaction occurs in a TNF-alpha-dependent manner. Interacts with RAB40C; acts as a GAP for RAB40C. In terms of processing, in response to TNF-alpha-induction, phosphorylated at Ser-728; phosphorylation leads to a conformational change, and thus, increases its association with 14-3-3 proteins, MAP3K5, RIPK1 and TRAF2 in endothelial cells; also stimulates regulatory p85 subunit sequestring and PI3K-p85 complex activity inhibition. Expressed in endothelial and vascular smooth muscle cells (VSMCs). Expressed in prostate epithelial but poorly in prostate cancer cells. Poorly expressed in medulloblastoma cells compared to cerebellar precursor proliferating progenitor cells (at protein level). Low expression in prostate. Down-regulated in prostate cancer.

The protein resides in the cytoplasm. It is found in the cell membrane. It localises to the membrane. The protein localises to the cell projection. Its subcellular location is the dendrite. Functionally, functions as a scaffold protein implicated in the regulation of a large spectrum of both general and specialized signaling pathways. Involved in several processes such as innate immune response, inflammation and cell growth inhibition, apoptosis, cell survival, angiogenesis, cell migration and maturation. Also plays a role in cell cycle checkpoint control; reduces G1 phase cyclin levels resulting in G0/G1 cell cycle arrest. Mediates signal transduction by receptor-mediated inflammatory signals, such as the tumor necrosis factor (TNF), interferon (IFN) or lipopolysaccharide (LPS). Modulates the balance between phosphatidylinositol 3-kinase (PI3K)-AKT-mediated cell survival and apoptosis stimulated kinase (MAP3K5)-JNK signaling pathways; sequesters both AKT1 and MAP3K5 and counterbalances the activity of each kinase by modulating their phosphorylation status in response to pro-inflammatory stimuli. Acts as a regulator of the endoplasmic reticulum (ER) unfolded protein response (UPR) pathway; specifically involved in transduction of the ER stress-response to the JNK cascade through ERN1. Mediates TNF-alpha-induced apoptosis activation by facilitating dissociation of inhibitor 14-3-3 from MAP3K5; recruits the PP2A phosphatase complex which dephosphorylates MAP3K5 on 'Ser-966', leading to the dissociation of 13-3-3 proteins and activation of the MAP3K5-JNK signaling pathway in endothelial cells. Also mediates TNF/TRAF2-induced MAP3K5-JNK activation, while it inhibits CHUK-NF-kappa-B signaling. Acts a negative regulator in the IFN-gamma-mediated JAK-STAT signaling cascade by inhibiting smooth muscle cell (VSMCs) proliferation and intimal expansion, and thus, prevents graft arteriosclerosis (GA). Acts as a GTPase-activating protein (GAP) for the ADP ribosylation factor 6 (ARF6), Ras and RAB40C. Promotes hydrolysis of the ARF6-bound GTP and thus, negatively regulates phosphatidylinositol 4,5-bisphosphate (PIP2)-dependent TLR4-TIRAP-MyD88 and NF-kappa-B signaling pathways in endothelial cells in response to lipopolysaccharides (LPS). Binds specifically to phosphatidylinositol 4-phosphate (PtdIns4P) and phosphatidylinositol 3-phosphate (PtdIns3P). In response to vascular endothelial growth factor (VEGFA), acts as a negative regulator of the VEGFR2-PI3K-mediated angiogenic signaling pathway by inhibiting endothelial cell migration and tube formation. In the developing brain, promotes both the transition from the multipolar to the bipolar stage and the radial migration of cortical neurons from the ventricular zone toward the superficial layer of the neocortex in a glial-dependent locomotion process. Probable downstream effector of the Reelin signaling pathway; promotes Purkinje cell (PC) dendrites development and formation of cerebellar synapses. Also functions as a tumor suppressor protein in prostate cancer progression; prevents cell proliferation and epithelial-to-mesenchymal transition (EMT) through activation of the glycogen synthase kinase-3 beta (GSK3B)-induced beta-catenin and inhibition of PI3K-AKT and Ras-MAPK survival downstream signaling cascades, respectively. This Homo sapiens (Human) protein is Disabled homolog 2-interacting protein.